The chain runs to 239 residues: tRNA1(Val) (adenine(37)-N6)-methyltransferase (239 aa).

The protein belongs to the methyltransferase superfamily. tRNA (adenine-N(6)-)-methyltransferase family.

It is found in the cytoplasm. The catalysed reaction is adenosine(37) in tRNA1(Val) + S-adenosyl-L-methionine = N(6)-methyladenosine(37) in tRNA1(Val) + S-adenosyl-L-homocysteine + H(+). Its function is as follows. Specifically methylates the adenine in position 37 of tRNA(1)(Val) (anticodon cmo5UAC). The protein is tRNA1(Val) (adenine(37)-N6)-methyltransferase of Trichodesmium erythraeum (strain IMS101).